The following is a 296-amino-acid chain: tRNA uridine(34) hydroxylase (296 aa).

Residues 132-226 enclose the Rhodanese domain; that stretch reads AGRPVVMLDT…YFEEVGGAHY (95 aa). Cys-186 (cysteine persulfide intermediate) is an active-site residue.

Belongs to the TrhO family.

The catalysed reaction is uridine(34) in tRNA + AH2 + O2 = 5-hydroxyuridine(34) in tRNA + A + H2O. Functionally, catalyzes oxygen-dependent 5-hydroxyuridine (ho5U) modification at position 34 in tRNAs. This Burkholderia thailandensis (strain ATCC 700388 / DSM 13276 / CCUG 48851 / CIP 106301 / E264) protein is tRNA uridine(34) hydroxylase.